The primary structure comprises 207 residues: Large ribosomal subunit protein uL3 (207 aa).

The tract at residues 129-152 (AGGPAGHGSRFQRHPGSIGSNTTP) is disordered.

The protein belongs to the universal ribosomal protein uL3 family. In terms of assembly, part of the 50S ribosomal subunit. Forms a cluster with proteins L14 and L19.

One of the primary rRNA binding proteins, it binds directly near the 3'-end of the 23S rRNA, where it nucleates assembly of the 50S subunit. This chain is Large ribosomal subunit protein uL3, found in Leptospira biflexa serovar Patoc (strain Patoc 1 / ATCC 23582 / Paris).